Reading from the N-terminus, the 244-residue chain is tRNA (guanine-N(7)-)-methyltransferase (244 aa).

Residues 1–24 form a disordered region; it reads MTDSHVPHPESPAVEEGEERPHRR. Positions 74, 99, 126, and 149 each coordinate S-adenosyl-L-methionine. Asp149 is an active-site residue. Residues Lys153, Asp185, and 222-225 each bind substrate; that span reads TKFE.

It belongs to the class I-like SAM-binding methyltransferase superfamily. TrmB family.

It catalyses the reaction guanosine(46) in tRNA + S-adenosyl-L-methionine = N(7)-methylguanosine(46) in tRNA + S-adenosyl-L-homocysteine. Its pathway is tRNA modification; N(7)-methylguanine-tRNA biosynthesis. In terms of biological role, catalyzes the formation of N(7)-methylguanine at position 46 (m7G46) in tRNA. The sequence is that of tRNA (guanine-N(7)-)-methyltransferase from Pseudomonas syringae pv. syringae (strain B728a).